The chain runs to 398 residues: GTPase Obg (398 aa).

The Obg domain occupies 1–159 (MKFVDEAPIS…RNLKLELKVL (159 aa)). A disordered region spans residues 128-148 (TRFKSSTNRVPRKTTPGTEGE). An OBG-type G domain is found at 160-333 (ADVGMLGLPN…LSGKIMDHLE (174 aa)). Residues 166-173 (GLPNAGKS), 191-195 (FTTLV), 213-216 (DIPG), 283-286 (NKID), and 314-316 (SAL) each bind GTP. 2 residues coordinate Mg(2+): Ser-173 and Thr-193.

This sequence belongs to the TRAFAC class OBG-HflX-like GTPase superfamily. OBG GTPase family. In terms of assembly, monomer. The cofactor is Mg(2+).

It localises to the cytoplasm. In terms of biological role, an essential GTPase which binds GTP, GDP and possibly (p)ppGpp with moderate affinity, with high nucleotide exchange rates and a fairly low GTP hydrolysis rate. Plays a role in control of the cell cycle, stress response, ribosome biogenesis and in those bacteria that undergo differentiation, in morphogenesis control. The protein is GTPase Obg of Cellvibrio japonicus (strain Ueda107) (Pseudomonas fluorescens subsp. cellulosa).